We begin with the raw amino-acid sequence, 803 residues long: Ubiquitin carboxyl-terminal hydrolase 45 (803 aa).

The interval 1-34 is disordered; that stretch reads MRLKDPFSLKTADMTKRSNKPKKPRDEDSSDEVG. The UBP-type zinc finger occupies 36–153; sequence LTCQHVSRAV…QTLDFLQKQS (118 aa). 12 residues coordinate Zn(2+): cysteine 38, histidine 40, cysteine 62, cysteine 65, cysteine 85, cysteine 88, cysteine 93, histidine 100, histidine 104, histidine 113, cysteine 126, and cysteine 129. The USP domain maps to 192–802; the sequence is KGINNLGNTC…QAYLLFYEEL (611 aa). Catalysis depends on cysteine 201, which acts as the Nucleophile. A disordered region spans residues 394–554; it reads PTNPARLGKS…LPSIRPQQGG (161 aa). The span at 403–417 shows a compositional bias: basic and acidic residues; sequence SGREQDSLTSHDDSL. Polar residues-rich tracts occupy residues 419-440 and 469-480; these read AHSQ…SRHS and SYRTDTMGSQSD. The span at 502 to 531 shows a compositional bias: low complexity; sequence SEWSPRIPSVSSHSSTSDKTSITTTLSTTT. A compositionally biased stretch (polar residues) spans 532–545; the sequence is HNPSLKSNPSSTPL. Catalysis depends on histidine 739, which acts as the Proton acceptor.

Belongs to the peptidase C19 family. In terms of tissue distribution, retina.

The protein localises to the photoreceptor inner segment. Its subcellular location is the cytoplasm. The protein resides in the nucleus. The enzyme catalyses Thiol-dependent hydrolysis of ester, thioester, amide, peptide and isopeptide bonds formed by the C-terminal Gly of ubiquitin (a 76-residue protein attached to proteins as an intracellular targeting signal).. Functionally, catalyzes the deubiquitination of SPDL1. Plays a role in the repair of UV-induced DNA damage via deubiquitination of ERCC1, promoting its recruitment to DNA damage sites. May be involved in the maintenance of photoreceptor function. May play a role in normal retinal development. This Danio rerio (Zebrafish) protein is Ubiquitin carboxyl-terminal hydrolase 45.